The following is a 144-amino-acid chain: Large ribosomal subunit protein uL16 (144 aa).

This sequence belongs to the universal ribosomal protein uL16 family. As to quaternary structure, part of the 50S ribosomal subunit.

Functionally, binds 23S rRNA and is also seen to make contacts with the A and possibly P site tRNAs. The chain is Large ribosomal subunit protein uL16 from Caldanaerobacter subterraneus subsp. tengcongensis (strain DSM 15242 / JCM 11007 / NBRC 100824 / MB4) (Thermoanaerobacter tengcongensis).